A 36-amino-acid polypeptide reads, in one-letter code: Adenylate kinase (36 aa).

An ATP-binding site is contributed by 10–15 (GAGKGT). Residues 30–36 (ATGDLFR) form an NMP region. AMP contacts are provided by T31 and R36.

The protein belongs to the adenylate kinase family. As to quaternary structure, monomer.

Its subcellular location is the cytoplasm. The enzyme catalyses AMP + ATP = 2 ADP. It functions in the pathway purine metabolism; AMP biosynthesis via salvage pathway; AMP from ADP: step 1/1. Catalyzes the reversible transfer of the terminal phosphate group between ATP and AMP. Plays an important role in cellular energy homeostasis and in adenine nucleotide metabolism. The chain is Adenylate kinase (adk) from Streptomyces griseus.